Here is a 1220-residue protein sequence, read N- to C-terminus: DNA-directed RNA polymerase subunit beta (1220 aa).

The protein belongs to the RNA polymerase beta chain family. In terms of assembly, the RNAP catalytic core consists of 2 alpha, 1 beta, 1 beta' and 1 omega subunit. When a sigma factor is associated with the core the holoenzyme is formed, which can initiate transcription.

It catalyses the reaction RNA(n) + a ribonucleoside 5'-triphosphate = RNA(n+1) + diphosphate. In terms of biological role, DNA-dependent RNA polymerase catalyzes the transcription of DNA into RNA using the four ribonucleoside triphosphates as substrates. This is DNA-directed RNA polymerase subunit beta from Mesomycoplasma hyopneumoniae (strain 232) (Mycoplasma hyopneumoniae).